The primary structure comprises 94 residues: MLKPLGDRVVIEQVETEEKTASGIVLPDTAKEKPQEGRVVAVGTGRVTENGEKIALEVKEGDSVIFSKYAGTEVKYDGKEYLILRESDILAIIG.

This sequence belongs to the GroES chaperonin family. In terms of assembly, heptamer of 7 subunits arranged in a ring. Interacts with the chaperonin GroEL.

It localises to the cytoplasm. Functionally, together with the chaperonin GroEL, plays an essential role in assisting protein folding. The GroEL-GroES system forms a nano-cage that allows encapsulation of the non-native substrate proteins and provides a physical environment optimized to promote and accelerate protein folding. GroES binds to the apical surface of the GroEL ring, thereby capping the opening of the GroEL channel. The protein is Co-chaperonin GroES of Halalkalibacterium halodurans (strain ATCC BAA-125 / DSM 18197 / FERM 7344 / JCM 9153 / C-125) (Bacillus halodurans).